The following is a 52-amino-acid chain: Large ribosomal subunit protein bL33 (52 aa).

It belongs to the bacterial ribosomal protein bL33 family.

The polypeptide is Large ribosomal subunit protein bL33 (Chlamydia trachomatis serovar A (strain ATCC VR-571B / DSM 19440 / HAR-13)).